The following is a 570-amino-acid chain: Glycine--tRNA ligase (570 aa).

The substrate site is built by R99 and E165. Residues 197–199, 207–212, 324–325, and 443–446 each bind ATP; these read RNE, LRLREF, EC, and GIDR. 212 to 216 serves as a coordination point for substrate; the sequence is FSQAE. 439–443 is a binding site for substrate; sequence EPSFG.

Belongs to the class-II aminoacyl-tRNA synthetase family.

The protein localises to the cytoplasm. It carries out the reaction tRNA(Gly) + glycine + ATP = glycyl-tRNA(Gly) + AMP + diphosphate. Catalyzes the attachment of glycine to tRNA(Gly). The polypeptide is Glycine--tRNA ligase (Thermococcus sibiricus (strain DSM 12597 / MM 739)).